The primary structure comprises 324 residues: ATP synthase mitochondrial F1 complex assembly factor 1 (324 aa).

A mitochondrion-targeting transit peptide spans Met-1–Leu-54.

The protein belongs to the ATP11 family. As to quaternary structure, interacts with ATP5F1B; involved in the assembly of the F1 component of the mitochondrial ATP synthase (ATPase). As to expression, widely expressed but with low level.

It is found in the mitochondrion inner membrane. In terms of biological role, has a complex stabilizing activity in the assembly of the mitochondrial F1-F0 complex. The protein is ATP synthase mitochondrial F1 complex assembly factor 1 of Mus musculus (Mouse).